Reading from the N-terminus, the 263-residue chain is MKNAFKDALKAGRPQIGLWLGLANSYSAELLAGAGFDWLLIDGEHAPNNVQTVLTQLQAIAPYPSQPVVRPSWNDPVQIKQLLDVGAQTLLIPMVQNADEARNAVAATRYPPAGIRGVGSALARASRWNRIPNYLHQANDAMCVLVQIETREAMSNLASILDVDGIDGVFIGPADLSADMGFAGNPQHPEVQAAIENAIVQIRAAGKAPGILMANEALAKRYLELGALFVAVGVDTTLLARGAEALAARFGAEKKLSGASGVY.

The Proton acceptor role is filled by His45. A substrate-binding site is contributed by Gln147. Residue Glu149 coordinates a divalent metal cation. Ala174 and Asp175 together coordinate substrate. Asp175 contacts a divalent metal cation.

This sequence belongs to the HpcH/HpaI aldolase family. In terms of assembly, homohexamer; trimer of dimers. The cofactor is a divalent metal cation.

It carries out the reaction 4-hydroxy-2-oxoheptanedioate = succinate semialdehyde + pyruvate. It participates in aromatic compound metabolism; 4-hydroxyphenylacetate degradation; pyruvate and succinate semialdehyde from 4-hydroxyphenylacetate: step 7/7. Functionally, catalyzes the reversible retro-aldol cleavage of 4-hydroxy-2-ketoheptane-1,7-dioate (HKHD) to pyruvate and succinic semialdehyde. This Salmonella heidelberg (strain SL476) protein is 4-hydroxy-2-oxo-heptane-1,7-dioate aldolase.